The chain runs to 214 residues: Oocyte zinc finger protein XlCOF10 (214 aa).

7 C2H2-type zinc fingers span residues 1–23, 29–51, 57–79, 85–107, 113–135, 141–163, and 169–191; these read FSCS…RQLH, FTCS…HRIH, FTCD…QKSH, FCCS…QRTH, FTCT…QKSH, FSCS…QRIH, and FSCS…EKCH.

Belongs to the krueppel C2H2-type zinc-finger protein family.

It localises to the nucleus. In terms of biological role, may be involved in transcriptional regulation. This chain is Oocyte zinc finger protein XlCOF10, found in Xenopus laevis (African clawed frog).